The chain runs to 130 residues: UPF0251 protein Swol_2090 (130 aa).

It belongs to the UPF0251 family.

The chain is UPF0251 protein Swol_2090 from Syntrophomonas wolfei subsp. wolfei (strain DSM 2245B / Goettingen).